The primary structure comprises 387 residues: Phosphoglycerate kinase (387 aa).

Substrate is bound by residues 21–23 (DLN), Arg-36, 59–62 (HLGR), Arg-113, and Arg-146. Residues Lys-197, Glu-314, and 340–343 (GGDT) contribute to the ATP site.

This sequence belongs to the phosphoglycerate kinase family. As to quaternary structure, monomer.

The protein localises to the cytoplasm. The enzyme catalyses (2R)-3-phosphoglycerate + ATP = (2R)-3-phospho-glyceroyl phosphate + ADP. Its pathway is carbohydrate degradation; glycolysis; pyruvate from D-glyceraldehyde 3-phosphate: step 2/5. In Proteus mirabilis (strain HI4320), this protein is Phosphoglycerate kinase.